We begin with the raw amino-acid sequence, 955 residues long: MEVGSEEEKWEKLDAEFDHFVVDMKPFVLKLPHRTERQRCALWIRKLCEPSGTGAGIMGRKNRNLYAKLLLHMLKRGALEGPFTHRPEPGTLKILPSYMSIYFDEPNPARAKGSSPEGLPAWVLGELETSEHKLNESWKLSSGEDNTLVQSPTDVYSREQYTGKLRVRSHSLSPTHREDGQNITPKICEVYSKKSPVSLDDSDIEARLNSWNLGIENPRYLRQKPIPVSLMTPKFSLRKSSSFHDDHFLSRIREKELDMKTKMMEAKFHEEKLKLQQKHDADVQKILERKNNEIEELKTLYRSKQHETEETIRKLEKKVQTLIRDCQVIRETKEDQIAELKKICEQSTESLNNDWEKKLHNAVAEMEQEKFDLQKQHTENIQELLEDTNVRLNKMESEYMAQTQSTNHMIKELEARVQQLTGEAENSNLQRQKLIQEKAELERCYQITCSELQEVKARRNTLHKEKDHLVNDYEQNMKLLQTKYDADINLLKQEHALSASKASSMIEELEQNVCQLKQQLQESELQRKQQLRDQENKFQMEKSHLKHIYEKKAHDLQSELDKGKEDTQKKIHKFEEALKEKEEQLTRVTEVQRLQAQQADAALEEFKRQVELNSEKVYAEMKEQMEKVEADLTRSKSLREKQSKEFLWQLEDIRQRYEQQIVELKLEHEQEKTHLLQQHNAEKDSLVRDHEREIENLEKQLRAANMEHENQIQEFKKRDAQVIADMEAQVHKLREELINVNSQRKQQLVELGLLREEEKQRATREHEIVVNKLKAESEKMKIELKKTHAAETEMTLEKANSKLKQIEKEYTQKLAKSSQIIAELQTTISSLKEENSQQQLAAERRLQDVRQKFEDEKKQLIRDNDQAIKVLQDELENRSNQVRCAEKKLQHKELESQEQITYIRQEYETKLKGLMPASLRQELEDTISSLKSQVNFLQKRASILQEELTTYQGRR.

A coiled-coil region spans residues 277-954 (QKHDADVQKI…QEELTTYQGR (678 aa)).

The protein resides in the cytoplasm. The protein localises to the cytoskeleton. Its subcellular location is the microtubule organizing center. It localises to the centrosome. This is Centrosomal protein of 112 kDa (CEP112) from Homo sapiens (Human).